Reading from the N-terminus, the 217-residue chain is MWTLGRRSVASFLPRSALPGFAPTRAGAPRPAKDLSLSGLPGLRIGTAKAPARSQSSLSLRCLNQTLDVKKQSVCWINLRTAGTLGDAGTLDDTTYERLAEETLDSLAEFFEDLADKPYTFEDYDVSFGSGVLTVKLGGDLGTYVINKQTPNKQIWLSSPSSGPKRYDWTGRNWVYSHDGVSLHELLATELTQALKTKLDLSALAYSGKDTCCPAQC.

The N-terminal 42 residues, Met-1–Gly-42, are a transit peptide targeting the mitochondrion.

It belongs to the frataxin family. Component of the mitochondrial core iron-sulfur cluster (ISC) complex composed of NFS1, LYRM4, NDUFAB1, ISCU, FXN, and FDX2; this complex is a heterohexamer containing two copies of each monomer. Homodimer. Monomer (probable predominant form). Oligomer. Monomers and polymeric aggregates of &gt;1 MDa have been isolated from mitochondria. A small fraction of heterologous overexpressed recombinant frataxin forms high-molecular weight aggregates that incorporate iron. Interacts with LYRM4. Interacts (via ferrous form) with ISCU; the interaction is possible when both are bound to the dimeric form of the cysteine desulfurase complex (NFS1:LYRM4) and the interaction enhances FXN interaction to the dimeric form of the cysteine desulfurase complex (NFS1:LYRM4). Interacts with FECH; one iron-bound FXN monomer seems to interact with a FECH homodimer. Interacts with SDHA and SDHB. Interacts with ACO2; the interaction is dependent on citrate. Interacts with HSPA9. In terms of assembly, interacts with ACO1. Interacts with ISCU (cytoplasmic form). Post-translationally, processed in two steps by mitochondrial processing peptidase (MPP). MPP first cleaves the precursor to intermediate form and subsequently converts the intermediate to yield frataxin mature form (frataxin(81-210)) which is the predominant form. The additional forms, frataxin(56-210) and frataxin(78-210), seem to be produced when the normal maturation process is impaired; their physiological relevance is unsure.

It is found in the mitochondrion. It localises to the cytoplasm. Its subcellular location is the cytosol. The catalysed reaction is 4 Fe(2+) + O2 + 4 H(+) = 4 Fe(3+) + 2 H2O. Functionally, functions as an activator of persulfide transfer to the scaffoding protein ISCU as component of the core iron-sulfur cluster (ISC) assembly complex and participates to the [2Fe-2S] cluster assembly. Accelerates sulfur transfer from NFS1 persulfide intermediate to ISCU and to small thiols such as L-cysteine and glutathione leading to persulfuration of these thiols and ultimately sulfide release. Binds ferrous ion and is released from FXN upon the addition of both L-cysteine and reduced FDX2 during [2Fe-2S] cluster assembly. The core iron-sulfur cluster (ISC) assembly complex is involved in the de novo synthesis of a [2Fe-2S] cluster, the first step of the mitochondrial iron-sulfur protein biogenesis. This process is initiated by the cysteine desulfurase complex (NFS1:LYRM4:NDUFAB1) that produces persulfide which is delivered on the scaffold protein ISCU in a FXN-dependent manner. Then this complex is stabilized by FDX2 which provides reducing equivalents to accomplish the [2Fe-2S] cluster assembly. Finally, the [2Fe-2S] cluster is transferred from ISCU to chaperone proteins, including HSCB, HSPA9 and GLRX5. May play a role in the protection against iron-catalyzed oxidative stress through its ability to catalyze the oxidation of Fe(2+) to Fe(3+); the oligomeric form but not the monomeric form has in vitro ferroxidase activity. May be able to store large amounts of iron in the form of a ferrihydrite mineral by oligomerization; however, the physiological relevance is unsure as reports are conflicting and the function has only been shown using heterologous overexpression systems. May function as an iron chaperone protein that protects the aconitase [4Fe-4S]2+ cluster from disassembly and promotes enzyme reactivation. May play a role as a high affinity iron binding partner for FECH that is capable of both delivering iron to ferrochelatase and mediating the terminal step in mitochondrial heme biosynthesis. Modulates the RNA-binding activity of ACO1. May be involved in the cytoplasmic iron-sulfur protein biogenesis. May contribute to oxidative stress resistance and overall cell survival. This Bos taurus (Bovine) protein is Frataxin, mitochondrial.